Here is a 235-residue protein sequence, read N- to C-terminus: 2-C-methyl-D-erythritol 4-phosphate cytidylyltransferase (235 aa).

It belongs to the IspD/TarI cytidylyltransferase family. IspD subfamily.

The enzyme catalyses 2-C-methyl-D-erythritol 4-phosphate + CTP + H(+) = 4-CDP-2-C-methyl-D-erythritol + diphosphate. It participates in isoprenoid biosynthesis; isopentenyl diphosphate biosynthesis via DXP pathway; isopentenyl diphosphate from 1-deoxy-D-xylulose 5-phosphate: step 2/6. Its function is as follows. Catalyzes the formation of 4-diphosphocytidyl-2-C-methyl-D-erythritol from CTP and 2-C-methyl-D-erythritol 4-phosphate (MEP). This is 2-C-methyl-D-erythritol 4-phosphate cytidylyltransferase from Ectopseudomonas mendocina (strain ymp) (Pseudomonas mendocina).